A 188-amino-acid chain; its full sequence is HTH-type transcriptional repressor AcnR (188 aa).

Residues 10-70 form the HTH tetR-type domain; the sequence is TNSRQEILEG…ALAREDAARM (61 aa). A DNA-binding region (H-T-H motif) is located at residues 33 to 52; the sequence is TVRRLEEATGKSRGAIFHHF. Citrate-binding positions include 79 to 80, arginine 130, and asparagine 134; that span reads LV. Residue glutamate 181 coordinates Mg(2+). Arginine 185 is a citrate binding site.

In terms of assembly, homodimer.

Its function is as follows. AcnR negatively controls the expression of the aconitase gene acn. Binds to the imperfect inverted repeat in the acn promoter region. The protein is HTH-type transcriptional repressor AcnR of Corynebacterium glutamicum (strain ATCC 13032 / DSM 20300 / JCM 1318 / BCRC 11384 / CCUG 27702 / LMG 3730 / NBRC 12168 / NCIMB 10025 / NRRL B-2784 / 534).